Here is a 402-residue protein sequence, read N- to C-terminus: Selenoprotein P (402 aa).

The N-terminal stretch at methionine 1–threonine 19 is a signal peptide. Position 59 (selenocysteine 59) is a non-standard amino acid, selenocysteine. Asparagine 83 and asparagine 174 each carry an N-linked (GlcNAc...) asparagine glycan. Residues lysine 196 to leucine 291 are disordered. The span at arginine 203–histidine 231 shows a compositional bias: basic residues. Tandem repeats lie at residues histidine 204–histidine 205, histidine 206–proline 207, histidine 208–proline 209, histidine 210–serine 211, histidine 212–proline 213, histidine 214–proline 215, histidine 216–proline 217, histidine 218–proline 219, histidine 220–proline 221, histidine 222–proline 223, histidine 224–proline 225, histidine 226–proline 227, and histidine 228–histidine 229. The interval histidine 204–histidine 229 is 13 X 2 AA tandem repeats of H-[PHS]. Positions glutamine 232–threonine 247 are enriched in basic and acidic residues. Positions leucine 259 to proline 269 are enriched in basic residues. Serine 284 carries the post-translational modification Phosphoserine. Non-standard amino acids (selenocysteine) are located at selenocysteine 297, selenocysteine 307, selenocysteine 338, selenocysteine 350, selenocysteine 363, selenocysteine 365, selenocysteine 372, selenocysteine 388, selenocysteine 390, selenocysteine 397, and selenocysteine 399. The interval leucine 367–asparagine 402 is disordered.

The protein belongs to the selenoprotein P family. In terms of processing, phosphorylation sites are present in the extracellular medium. As to expression, brain and kidney. Most prominently expressed in the cerebellar cortex, hippocampus and olfactory bulb.

The protein localises to the secreted. Functionally, constitutes a major selenium pool in the brain and may play an important role in developing and/or modulating the morphology of neurons and/or glial cells. The polypeptide is Selenoprotein P (Bos taurus (Bovine)).